The primary structure comprises 555 residues: Phosphoglucomutase (555 aa).

Substrate contacts are provided by residues Thr45, Arg49, 148 to 149 (SH), and Lys158. Residue Ser148 is the Phosphoserine intermediate of the active site. Ser148 contacts Mg(2+). Mg(2+)-binding residues include Asp306, Asp308, and Asp310. Substrate is bound by residues 310–311 (DR) and 393–395 (EES).

Belongs to the phosphohexose mutase family. Requires Mg(2+) as cofactor.

It carries out the reaction alpha-D-glucose 1-phosphate = alpha-D-glucose 6-phosphate. Its function is as follows. This enzyme participates in both the breakdown and synthesis of glucose. The chain is Phosphoglucomutase (celB) from Komagataeibacter xylinus (Gluconacetobacter xylinus).